The sequence spans 151 residues: Myosin light polypeptide 6 (151 aa).

Cysteine 2 carries the post-translational modification N-acetylcysteine. The EF-hand 1 domain occupies 7-42 (DQTAEFKEAFQLFDRTGDGKILYSQCGDVMRALGQN). At serine 57 the chain carries Phosphoserine. At lysine 81 the chain carries N6-acetyllysine. The EF-hand 2 domain maps to 84 to 119 (GTYEDYVEGLRVFDKEGNGTVMGAEIRHVLVTLGEK).

As to quaternary structure, myosin is a hexamer of 2 heavy chains and 4 light chains. Interacts with SPATA6.

In terms of biological role, regulatory light chain of myosin. Does not bind calcium. The sequence is that of Myosin light polypeptide 6 (MYL6) from Bos taurus (Bovine).